The chain runs to 508 residues: Lysine--tRNA ligase (508 aa).

Mg(2+) is bound by residues Glu-416 and Glu-423.

The protein belongs to the class-II aminoacyl-tRNA synthetase family. As to quaternary structure, homodimer. Mg(2+) is required as a cofactor.

The protein localises to the cytoplasm. It carries out the reaction tRNA(Lys) + L-lysine + ATP = L-lysyl-tRNA(Lys) + AMP + diphosphate. The chain is Lysine--tRNA ligase from Prochlorococcus marinus (strain MIT 9303).